The primary structure comprises 220 residues: Membrane steroid-binding protein 1 (220 aa).

Residues 22–42 (VVFFTALALAFAIYQVISGWF) traverse the membrane as a helical segment. A Cytochrome b5 heme-binding domain is found at 74–171 (EITEEELKQY…SKYAKVGTVK (98 aa)). Positions 74-171 (EITEEELKQY…SKYAKVGTVK (98 aa)) are steroid-binding. The tract at residues 174–220 (GSEPETASVSEPTENVEQDAHVTTTPGKTVVDKSDDAPAETVLKKEE) is disordered. The segment covering 178–200 (ETASVSEPTENVEQDAHVTTTPG) has biased composition (polar residues). Basic and acidic residues predominate over residues 203-220 (VVDKSDDAPAETVLKKEE).

This sequence belongs to the cytochrome b5 family. MAPR subfamily. Interacts with BAK1 (via extracellular region). As to expression, expressed in cotyledons, stems, roots, leaves, flower and silique stalks, pistils and stigmas, but not in anthers.

The protein localises to the cell membrane. Its subcellular location is the endosome membrane. In terms of biological role, MSBP1 can bind to multiple steroid compounds with different affinities. Negatively regulates cell elongation and brassinosteroid signaling. May act as a coreceptor with BAK1 and enhances its endocytosis. The polypeptide is Membrane steroid-binding protein 1 (MSBP1) (Arabidopsis thaliana (Mouse-ear cress)).